Reading from the N-terminus, the 139-residue chain is Probable DNA-binding protein (139 aa).

Residues 97 to 139 (DEPSREASPDLGAAGAELEDESAQAGAVQGPETLRSQVLRART) form a disordered region.

The sequence is that of Probable DNA-binding protein from Homo sapiens (Human).